Consider the following 125-residue polypeptide: Multifunctional methyltransferase subunit TRM112-like protein (125 aa).

The TRM112 domain occupies 2–119 (KLLTHNLLSS…SRGIPNMLLS (118 aa)). Phosphoserine is present on residues Ser-119 and Ser-125.

Belongs to the TRM112 family. As to quaternary structure, part of the heterodimeric BUD23-TRM112 methyltransferase complex; this heterodimerization is necessary for the metabolic stability and activity of the catalytic subunit BUD23. Part of the heterodimeric N6AMT1-TRM112 methyltransferase complex; this heterodimerization is necessary for S-adenosyl-L-methionine-binding to N6AMT1/HEMK2. Part of the heterodimeric ALKBH8-TRM112 methyltransferase complex. Part of the heterodimeric METTL5-TRM112 methyltransferase complex; this heterodimerization is necessary for the stability of the catalytic subunit METTL5. Part of the heterodimeric THUMPD3-TRM112 methyltransferase complex; this complex forms an active tRNA methyltransferase, where TRMT112 acts as an activator of the catalytic subunit THUMPD3. Part of the heterodimeric THUMPD2-TRM112 methyltransferase complex; this complex forms an active tRNA methyltransferase, where TRMT112 acts as an activator of the catalytic subunit THUMPD2. Part of the heterodimeric TRMT11-TRM112 methyltransferase complex; this complex forms an active tRNA methyltransferase, where TRMT112 acts as an activator of the catalytic subunit TRMT11.

It is found in the nucleus. The protein resides in the nucleoplasm. The protein localises to the cytoplasm. It localises to the perinuclear region. In terms of biological role, acts as an activator of both rRNA/tRNA and protein methyltransferases. Together with methyltransferase BUD23, methylates the N(7) position of a guanine in 18S rRNA. The heterodimer with N6AMT1/HEMK2 catalyzes N5-methylation of ETF1 on 'Gln-185', using S-adenosyl L-methionine as methyl donor. The heterodimer with N6AMT1/HEMK2 also monomethylates 'Lys-12' of histone H4 (H4K12me1). The heterodimer with ALKBH8 catalyzes the methylation of 5-carboxymethyl uridine to 5-methylcarboxymethyl uridine at the wobble position of the anticodon loop in target tRNA species. Together with methyltransferase THUMPD3, catalyzes the formation of N(2)-methylguanosine at position 6 in a broad range of tRNA substrates and at position 7 of tRNA(Trp). Involved in the pre-rRNA processing steps leading to small-subunit rRNA production. Together with methyltransferase METTL5, specifically methylates the 6th position of adenine in position 1832 of 18S rRNA. This Homo sapiens (Human) protein is Multifunctional methyltransferase subunit TRM112-like protein.